The following is a 543-amino-acid chain: Chaperonin GroEL (543 aa).

Residues 29-32 (TLGP), 86-90 (DGTTT), glycine 413, 478-480 (NAA), and aspartate 494 contribute to the ATP site.

Belongs to the chaperonin (HSP60) family. Forms a cylinder of 14 subunits composed of two heptameric rings stacked back-to-back. Interacts with the co-chaperonin GroES.

It localises to the cytoplasm. It carries out the reaction ATP + H2O + a folded polypeptide = ADP + phosphate + an unfolded polypeptide.. Its function is as follows. Together with its co-chaperonin GroES, plays an essential role in assisting protein folding. The GroEL-GroES system forms a nano-cage that allows encapsulation of the non-native substrate proteins and provides a physical environment optimized to promote and accelerate protein folding. The polypeptide is Chaperonin GroEL (Lactobacillus gasseri (strain ATCC 33323 / DSM 20243 / BCRC 14619 / CIP 102991 / JCM 1131 / KCTC 3163 / NCIMB 11718 / NCTC 13722 / AM63)).